A 393-amino-acid chain; its full sequence is Methylthioribose kinase (393 aa).

ATP-binding positions include asparagine 38, lysine 53, and 107-109 (EDL). Residue aspartate 225 coordinates substrate. 242-244 (DPE) serves as a coordination point for ATP. Arginine 332 contributes to the substrate binding site.

This sequence belongs to the methylthioribose kinase family. Homodimer.

It catalyses the reaction 5-(methylsulfanyl)-D-ribose + ATP = 5-(methylsulfanyl)-alpha-D-ribose 1-phosphate + ADP + H(+). The protein operates within amino-acid biosynthesis; L-methionine biosynthesis via salvage pathway; S-methyl-5-thio-alpha-D-ribose 1-phosphate from S-methyl-5'-thioadenosine (hydrolase route): step 2/2. In terms of biological role, catalyzes the phosphorylation of methylthioribose into methylthioribose-1-phosphate. This chain is Methylthioribose kinase, found in Bacillus cereus (strain ATCC 14579 / DSM 31 / CCUG 7414 / JCM 2152 / NBRC 15305 / NCIMB 9373 / NCTC 2599 / NRRL B-3711).